Here is a 394-residue protein sequence, read N- to C-terminus: Flap endonuclease 1 (394 aa).

An N-domain region spans residues methionine 1–lysine 104. Position 34 (aspartate 34) interacts with Mg(2+). Residues arginine 47 and arginine 70 each contribute to the DNA site. Aspartate 86, glutamate 158, glutamate 160, aspartate 179, and aspartate 181 together coordinate Mg(2+). Positions aspartate 122–histidine 253 are I-domain. Residue glutamate 158 coordinates DNA. 2 residues coordinate DNA: glycine 231 and aspartate 233. Residue aspartate 233 participates in Mg(2+) binding. Residues glutamine 340 to phenylalanine 348 are interaction with PCNA. The disordered stretch occupies residues glutamine 358–alanine 394. Residues lysine 374 to alanine 394 are compositionally biased toward basic residues.

The protein belongs to the XPG/RAD2 endonuclease family. FEN1 subfamily. As to quaternary structure, interacts with PCNA. Three molecules of FEN1 bind to one PCNA trimer with each molecule binding to one PCNA monomer. PCNA stimulates the nuclease activity without altering cleavage specificity. Mg(2+) is required as a cofactor. Phosphorylated. Phosphorylation upon DNA damage induces relocalization to the nuclear plasma.

The protein resides in the nucleus. Its subcellular location is the nucleolus. The protein localises to the nucleoplasm. It is found in the mitochondrion. Its function is as follows. Structure-specific nuclease with 5'-flap endonuclease and 5'-3' exonuclease activities involved in DNA replication and repair. During DNA replication, cleaves the 5'-overhanging flap structure that is generated by displacement synthesis when DNA polymerase encounters the 5'-end of a downstream Okazaki fragment. It enters the flap from the 5'-end and then tracks to cleave the flap base, leaving a nick for ligation. Also involved in the long patch base excision repair (LP-BER) pathway, by cleaving within the apurinic/apyrimidinic (AP) site-terminated flap. Acts as a genome stabilization factor that prevents flaps from equilibrating into structures that lead to duplications and deletions. Also possesses 5'-3' exonuclease activity on nicked or gapped double-stranded DNA, and exhibits RNase H activity. Also involved in replication and repair of rDNA and in repairing mitochondrial DNA. The protein is Flap endonuclease 1 of Pyricularia oryzae (strain 70-15 / ATCC MYA-4617 / FGSC 8958) (Rice blast fungus).